A 540-amino-acid chain; its full sequence is Chaperonin GroEL (540 aa).

ATP is bound by residues 29–32 (TLGP), 86–90 (DGTTT), glycine 413, 476–478 (NAA), and aspartate 492.

The protein belongs to the chaperonin (HSP60) family. As to quaternary structure, forms a cylinder of 14 subunits composed of two heptameric rings stacked back-to-back. Interacts with the co-chaperonin GroES.

It is found in the cytoplasm. It catalyses the reaction ATP + H2O + a folded polypeptide = ADP + phosphate + an unfolded polypeptide.. Together with its co-chaperonin GroES, plays an essential role in assisting protein folding. The GroEL-GroES system forms a nano-cage that allows encapsulation of the non-native substrate proteins and provides a physical environment optimized to promote and accelerate protein folding. This chain is Chaperonin GroEL, found in Streptococcus sanguinis.